We begin with the raw amino-acid sequence, 381 residues long: Arrestin-C (381 aa).

This sequence belongs to the arrestin family. In terms of assembly, homodimer; disulfide-linked in response to retinal illumination. Interacts with CXCR4; the interaction is dependent on the C-terminal phosphorylation of CXCR4 and modulates the calcium ion mobilization activity of CXCR4. Interacts with GPR84. As to expression, inner and outer segments, and the inner plexiform regions of the retina.

The protein localises to the photoreceptor inner segment. It localises to the cell projection. Its subcellular location is the cilium. The protein resides in the photoreceptor outer segment. Its function is as follows. May play a role in an as yet undefined retina-specific signal transduction. Could bind to photoactivated-phosphorylated red/green opsins. This is Arrestin-C (Arr3) from Mus musculus (Mouse).